We begin with the raw amino-acid sequence, 440 residues long: G-protein coupled receptor family C group 5 member C (440 aa).

Positions 1-22 (MATHRTLLMCLGLPLFFPGALA) are cleaved as a signal peptide. Over 23–49 (QNHAPPGCSPDLDPLYYNLCDRSGAWG) the chain is Extracellular. Residues 50–70 (IVSEAVAGAGIITTFVLTIIL) form a helical membrane-spanning segment. Topologically, residues 71–84 (VASLPFVQDTKKRS) are cytoplasmic. A helical transmembrane segment spans residues 85-105 (LLGTQVFFLLGTLGLFCLVFA). At 106–119 (CVVKPDFSTCASRR) the chain is on the extracellular side. A helical transmembrane segment spans residues 120-140 (FLFGVLFAICFSCLVAHVLSL). Topologically, residues 141–155 (NFLTRKNHGPRGWVI) are cytoplasmic. A helical membrane pass occupies residues 156-176 (FTVALLLTLVEVIINTEWLII). Residues 177–207 (TLVRGGGQVSPLGNVSADSTMTSPCAIANMD) are Extracellular-facing. A glycan (N-linked (GlcNAc...) asparagine) is linked at N190. Residues 208-228 (FVMALIYVMLLLLTAFLGAWP) traverse the membrane as a helical segment. Residues 229-240 (TLCGRFKRWRKH) are Cytoplasmic-facing. Residues 241 to 261 (GVFVLLTTVISIAIWVVWIVM) traverse the membrane as a helical segment. Over 262 to 278 (YTYGNEQHHSPTWDDPT) the chain is Extracellular. The helical transmembrane segment at 279–299 (LAIALAANAWTFVLFYVIPEV) threads the bilayer. Over 300-440 (SQVTKPSPEQ…QVFRNPYVWD (141 aa)) the chain is Cytoplasmic. A phosphoserine mark is found at S343, S382, S402, and S405. A Phosphotyrosine modification is found at Y413. T422 bears the Phosphothreonine mark.

It belongs to the G-protein coupled receptor 3 family.

The protein localises to the cell membrane. In terms of biological role, this retinoic acid-inducible G-protein coupled receptor provide evidence for a possible interaction between retinoid and G-protein signaling pathways. The polypeptide is G-protein coupled receptor family C group 5 member C (Gprc5c) (Mus musculus (Mouse)).